Reading from the N-terminus, the 178-residue chain is Small ribosomal subunit protein bS16 (178 aa).

Residues 78 to 178 are disordered; that stretch reads KLGITQWTAG…AAPAEGEEQA (101 aa). Residues 91-113 show a composition bias toward basic and acidic residues; that stretch reads KKGEPGQKAKERAEERAQREADR. Residues 114 to 127 are compositionally biased toward low complexity; that stretch reads AAAAAEAAAAPAEE. Acidic residues predominate over residues 128–139; that stretch reads APAEEAPAEEAA. A compositionally biased stretch (low complexity) spans 140–172; that stretch reads AEAAPEAAAAEEAPAAEAAAEEAAPAAEEAAPA.

This sequence belongs to the bacterial ribosomal protein bS16 family.

The sequence is that of Small ribosomal subunit protein bS16 from Phenylobacterium zucineum (strain HLK1).